Reading from the N-terminus, the 382-residue chain is Mannitol-1-phosphate 5-dehydrogenase (382 aa).

4-15 is a binding site for NAD(+); sequence AVHFGAGNIGRG.

It belongs to the mannitol dehydrogenase family.

The enzyme catalyses D-mannitol 1-phosphate + NAD(+) = beta-D-fructose 6-phosphate + NADH + H(+). This Vibrio vulnificus (strain YJ016) protein is Mannitol-1-phosphate 5-dehydrogenase.